A 487-amino-acid chain; its full sequence is Probable cytochrome P450 513B1 (487 aa).

The helical transmembrane segment at 1-18 (MNLLVLSVILAIIIYLIF) threads the bilayer. Residue C433 coordinates heme.

Belongs to the cytochrome P450 family. Heme serves as cofactor.

The protein resides in the membrane. The protein is Probable cytochrome P450 513B1 (cyp513B1) of Dictyostelium discoideum (Social amoeba).